A 296-amino-acid chain; its full sequence is Cytoplasmic envelopment protein 1 (296 aa).

Belongs to the herpesviridae cytoplasmic envelopment protein 1 family. As to quaternary structure, interacts with UL51; this interaction allows incorporation of UL7 within the virion.

The protein resides in the virion. It localises to the virion tegument. The protein localises to the host cytoplasm. It is found in the host Golgi apparatus. Functionally, plays a critical role in cytoplasmic virus egress. Participates in the final step of tegumentation and envelope acquisition within the host cytoplasm. This is Cytoplasmic envelopment protein 1 (UL7) from Human herpesvirus 1 (strain 17) (HHV-1).